The sequence spans 435 residues: ATP-dependent RNA helicase RhlB (435 aa).

The Q motif signature appears at 9-37; sequence QKFADFSLQTEIKTALNESGFEYCTPIQA. Positions 40-219 constitute a Helicase ATP-binding domain; sequence LPILLQKKDI…YDHMNEPEKV (180 aa). ATP is bound at residue 53–60; that stretch reads AQTGTGKT. The DEAD box motif lies at 165 to 168; sequence DEAD. In terms of domain architecture, Helicase C-terminal spans 243–390; that stretch reads KMRLLLTLLE…VTNYDSEALL (148 aa). Residues 395–435 form a disordered region; it reads APVRVHRKHNSRPQGRSGSGGKPRSGNRNAPRRHDKTRRHS. Over residues 424 to 435 the composition is skewed to basic residues; it reads APRRHDKTRRHS.

This sequence belongs to the DEAD box helicase family. RhlB subfamily. In terms of assembly, component of the RNA degradosome, which is a multiprotein complex involved in RNA processing and mRNA degradation.

Its subcellular location is the cytoplasm. It catalyses the reaction ATP + H2O = ADP + phosphate + H(+). Its function is as follows. DEAD-box RNA helicase involved in RNA degradation. Has RNA-dependent ATPase activity and unwinds double-stranded RNA. This Shewanella sediminis (strain HAW-EB3) protein is ATP-dependent RNA helicase RhlB.